Reading from the N-terminus, the 323-residue chain is Magnesium transporter NIPA1 (323 aa).

The Extracellular portion of the chain corresponds to 1–21 (MGTAAAAAAAGEGARGPSPAA). Residues 22–42 (VSLGLGVAVVSSLVNGSTFVL) traverse the membrane as a helical segment. The Cytoplasmic portion of the chain corresponds to 43–60 (QKKGIVRAKRRGTSYLTD). The helical transmembrane segment at 61 to 81 (IVWWAGTIAMAVGQIGNFLAY) threads the bilayer. Residue threonine 82 is a topological domain, extracellular. A helical membrane pass occupies residues 83–103 (AVPTVLVTPLGALGVPFGSIL). Residues 104–111 (ASYLLKEK) are Cytoplasmic-facing. A helical transmembrane segment spans residues 112-132 (LNILGKLGCLLSCAGSVVLII). Over 133–153 (HSPKSESVTTQAELEEKLTNP) the chain is Extracellular. The chain crosses the membrane as a helical span at residues 154–174 (VFVGYLCIVLLMLLLLIFWIA). The Cytoplasmic portion of the chain corresponds to 175 to 177 (PAH). Residues 178–198 (GPTNIMVYISICSLLGSFTVP) form a helical membrane-spanning segment. Over 199–218 (STKGIGLAAQDILHNNPSSQ) the chain is Extracellular. The chain crosses the membrane as a helical span at residues 219 to 239 (RALCLCLVLLAVLGCSIIVQF). Over 240–253 (RYINKALECFDSSV) the chain is Cytoplasmic. A helical membrane pass occupies residues 254-274 (FGAIYYVVFTTLVLLASAILF). Over 275–284 (REWSNVGLVD) the chain is Extracellular. A helical transmembrane segment spans residues 285–305 (FLGMACGFTTVSVGIVLIQVF). Residues 306–323 (KEFNFNLGEMNKSNMKTD) lie on the Cytoplasmic side of the membrane.

It belongs to the NIPA family. Homodimer. As to expression, widely expressed. Predominantly expressed in neuronal tissues. Brain, heart, kidney, liver and colon (at protein level).

The protein resides in the cell membrane. The protein localises to the early endosome. The enzyme catalyses Mg(2+)(in) = Mg(2+)(out). In terms of biological role, acts as a Mg(2+) transporter. Can also transport other divalent cations such as Fe(2+), Sr(2+), Ba(2+), Zn(2+) and Co(2+) but to a much less extent than Mg(2+). The chain is Magnesium transporter NIPA1 (Nipa1) from Mus musculus (Mouse).